A 498-amino-acid polypeptide reads, in one-letter code: Hexokinase-3 (498 aa).

The helical transmembrane segment at 4-24 (VAVAFAAVAVVAACSVAAVMV) threads the bilayer. A Hexokinase domain is found at 35 to 494 (RTVVEILKEL…SSIGSALLVA (460 aa)). Positions 90–227 (TGREKGTYYA…GLDMHVAALV (138 aa)) are hexokinase small subdomain. Residues G104 and T105 each coordinate ADP. Residues T193, K194, N228, and D229 each contribute to the D-glucose site. Residues 228 to 483 (NDTVGALSLG…QYVVVKAMED (256 aa)) form a hexokinase large subdomain region. Position 252 (T252) interacts with ADP. 3 residues coordinate D-glucose: N255, E283, and E314. G448 is a binding site for ADP.

This sequence belongs to the hexokinase family. As to expression, expressed in roots, emerging lateral roots, vascular tissues of cotyledons, roots and leaves, root and shoot meristems, anther filaments and funiculi of mature seeds.

Its subcellular location is the mitochondrion outer membrane. It catalyses the reaction a D-hexose + ATP = a D-hexose 6-phosphate + ADP + H(+). The enzyme catalyses D-fructose + ATP = D-fructose 6-phosphate + ADP + H(+). It carries out the reaction D-glucose + ATP = D-glucose 6-phosphate + ADP + H(+). Its pathway is carbohydrate metabolism; hexose metabolism. It participates in carbohydrate degradation; glycolysis; D-glyceraldehyde 3-phosphate and glycerone phosphate from D-glucose: step 1/4. Its function is as follows. Fructose and glucose phosphorylating enzyme. May be involved in the phosphorylation of glucose during the export from mitochondrion to cytosol. Plays a role in plant growth and development, perhaps by mediating cross-talk between glucose and hormone response pathways. Involved in root hair cell development by mediating certain aspects of cross talk between glucose and ethylene response pathways. In Arabidopsis thaliana (Mouse-ear cress), this protein is Hexokinase-3.